A 32-amino-acid polypeptide reads, in one-letter code: MTLISDSQIVVALVSAFVTGILALRLGRELYR.

The helical transmembrane segment at 10–27 (VVALVSAFVTGILALRLG) threads the bilayer.

Belongs to the PsaM family.

The protein localises to the plastid. It localises to the chloroplast thylakoid membrane. This Staurastrum punctulatum (Green alga) protein is Photosystem I reaction center subunit XII.